The following is a 487-amino-acid chain: Cell wall protein TIR4 (487 aa).

An N-terminal signal peptide occupies residues 1–22 (MAYSKITLLAALAAIAYAQTQA). Repeat copies occupy residues 137 to 148 (SSSVAPSSSEVV), 149 to 160 (SSSVAPSSSEVV), 161 to 172 (SSSVAPSSSEVV), 173 to 184 (SSSVASSSSEVA), 185 to 196 (SSSVAPSSSEVV), 197 to 208 (SSSVASSSSEVA), 209 to 220 (SSSVAPSSSEVV), 221 to 232 (SSSVAPSSSEVV), 233 to 244 (SSSVASSSSEVA), 245 to 256 (SSSVAPSSSEVV), and 257 to 268 (SSSVASSTSEAT). The tract at residues 137 to 268 (SSSVAPSSSE…SVASSTSEAT (132 aa)) is 11 X 12 AA approximate tandem repeats, Ser-rich. The disordered stretch occupies residues 206–299 (EVASSSVAPS…SVSSSSAVSS (94 aa)). Residues Asn327, Asn348, Asn368, Asn403, and Asn404 are each glycosylated (N-linked (GlcNAc...) asparagine). A lipid anchor (GPI-anchor amidated asparagine) is attached at Asn465. Residues 466–487 (GAAKAVIGMGAGALAAVAAMLL) constitute a propeptide, removed in mature form.

This sequence belongs to the SRP1/TIP1 family. Post-translationally, the GPI-anchor is attached to the protein in the endoplasmic reticulum and serves to target the protein to the cell surface. There, the glucosamine-inositol phospholipid moiety is cleaved off and the GPI-modified mannoprotein is covalently attached via its lipidless GPI glycan remnant to the 1,6-beta-glucan of the outer cell wall layer.

Its subcellular location is the secreted. The protein localises to the cell wall. It is found in the membrane. Component of the cell wall. Required for anaerobic growth. This chain is Cell wall protein TIR4 (TIR4), found in Saccharomyces cerevisiae (strain ATCC 204508 / S288c) (Baker's yeast).